Reading from the N-terminus, the 496-residue chain is Membrane-bound lytic murein transglycosylase F (496 aa).

An N-terminal signal peptide occupies residues 1–31; it reads MPIFSTRVLTYLRCIFRLFIGLTLLLTLVGC. The interval 32 to 271 is non-LT domain; that stretch reads DFYTPSSQLE…KLDEKYFGHV (240 aa). Residues 273 to 496 are LT domain; sequence NFDFVDTRTF…AEVVKQITLR (224 aa). Residue glutamate 316 is part of the active site. The tract at residues 464–486 is disordered; the sequence is HRREELDDDDSSEPPSAERPTVI.

In the N-terminal section; belongs to the bacterial solute-binding protein 3 family. This sequence in the C-terminal section; belongs to the transglycosylase Slt family.

The protein resides in the cell outer membrane. It catalyses the reaction Exolytic cleavage of the (1-&gt;4)-beta-glycosidic linkage between N-acetylmuramic acid (MurNAc) and N-acetylglucosamine (GlcNAc) residues in peptidoglycan, from either the reducing or the non-reducing ends of the peptidoglycan chains, with concomitant formation of a 1,6-anhydrobond in the MurNAc residue.. In terms of biological role, murein-degrading enzyme that degrades murein glycan strands and insoluble, high-molecular weight murein sacculi, with the concomitant formation of a 1,6-anhydromuramoyl product. Lytic transglycosylases (LTs) play an integral role in the metabolism of the peptidoglycan (PG) sacculus. Their lytic action creates space within the PG sacculus to allow for its expansion as well as for the insertion of various structures such as secretion systems and flagella. In Aeromonas hydrophila subsp. hydrophila (strain ATCC 7966 / DSM 30187 / BCRC 13018 / CCUG 14551 / JCM 1027 / KCTC 2358 / NCIMB 9240 / NCTC 8049), this protein is Membrane-bound lytic murein transglycosylase F.